The following is a 397-amino-acid chain: Ubiquitin-like modifier-activating enzyme 5 (397 aa).

Residues Gly77, Asp98, Lys121, Asn144, and Asn178 each coordinate ATP. 2 residues coordinate Zn(2+): Cys220 and Cys223. Cys244 (glycyl thioester intermediate) is an active-site residue. Positions 297 and 302 each coordinate Zn(2+). Residues 329–341 (VVHEDNDWGIELV) carry the UFM1-interacting sequence (UIS) motif. Residues 342–372 (SEVSEEELKAASGPVPDLPEGIKVAYTIPIT) are linker. A UFC1-binding sequence (UFC) motif is present at residues 382-397 (DSEQSLDELMAQMKNL).

Belongs to the ubiquitin-activating E1 family. UBA5 subfamily. In terms of assembly, homodimer; homodimerization is required for ufm1 activation. Interacts (via UIS motif) with ufm1; binds ufm1 via a trans-binding mechanism in which ufm1 interacts with distinct sites in both subunits of the uba5 homodimer. Interacts (via C-terminus) with ufc1.

The protein resides in the cytoplasm. It localises to the nucleus. The protein localises to the endoplasmic reticulum membrane. It is found in the golgi apparatus. In terms of biological role, E1-like enzyme which specifically catalyzes the first step in ufmylation. Activates ufm1 by first adenylating its C-terminal glycine residue with ATP, and thereafter linking this residue to the side chain of a cysteine residue in E1, yielding a ufm1-E1 thioester and free AMP. Activates ufm1 via a trans-binding mechanism, in which ufm1 interacts with distinct sites in both subunits of the uba5 homodimer. Trans-binding also promotes stabilization of the uba5 homodimer, and enhances ATP-binding. Transfer of ufm1 from uba5 to the E2-like enzyme UFC1 also takes place using a trans mechanism. Ufmylation plays a key role in various processes, such as ribosome recycling, response to DNA damage, interferon response or reticulophagy (also called ER-phagy). The polypeptide is Ubiquitin-like modifier-activating enzyme 5 (Xenopus laevis (African clawed frog)).